Consider the following 174-residue polypeptide: Ribosome maturation factor RimM (174 aa).

Residues 98-171 (EGEFYFHEII…KIEIELMEGL (74 aa)) form the PRC barrel domain.

The protein belongs to the RimM family. In terms of assembly, binds ribosomal protein uS19.

It is found in the cytoplasm. An accessory protein needed during the final step in the assembly of 30S ribosomal subunit, possibly for assembly of the head region. Essential for efficient processing of 16S rRNA. May be needed both before and after RbfA during the maturation of 16S rRNA. It has affinity for free ribosomal 30S subunits but not for 70S ribosomes. The protein is Ribosome maturation factor RimM of Bacillus subtilis (strain 168).